The following is a 622-amino-acid chain: DNA mismatch repair protein MutL (622 aa).

The segment at 376 to 401 is disordered; that stretch reads REVREGSSTGRAGNYQPPEPPSREAM.

Belongs to the DNA mismatch repair MutL/HexB family.

Its function is as follows. This protein is involved in the repair of mismatches in DNA. It is required for dam-dependent methyl-directed DNA mismatch repair. May act as a 'molecular matchmaker', a protein that promotes the formation of a stable complex between two or more DNA-binding proteins in an ATP-dependent manner without itself being part of a final effector complex. The protein is DNA mismatch repair protein MutL of Aeromonas hydrophila subsp. hydrophila (strain ATCC 7966 / DSM 30187 / BCRC 13018 / CCUG 14551 / JCM 1027 / KCTC 2358 / NCIMB 9240 / NCTC 8049).